The chain runs to 101 residues: Large ribosomal subunit protein uL23 (101 aa).

This sequence belongs to the universal ribosomal protein uL23 family. In terms of assembly, part of the 50S ribosomal subunit. Contacts protein L29, and trigger factor when it is bound to the ribosome.

Functionally, one of the early assembly proteins it binds 23S rRNA. One of the proteins that surrounds the polypeptide exit tunnel on the outside of the ribosome. Forms the main docking site for trigger factor binding to the ribosome. This is Large ribosomal subunit protein uL23 from Lactobacillus helveticus (strain DPC 4571).